A 458-amino-acid chain; its full sequence is Argininosuccinate lyase (458 aa).

This sequence belongs to the lyase 1 family. Argininosuccinate lyase subfamily.

It is found in the cytoplasm. It catalyses the reaction 2-(N(omega)-L-arginino)succinate = fumarate + L-arginine. Its pathway is amino-acid biosynthesis; L-arginine biosynthesis; L-arginine from L-ornithine and carbamoyl phosphate: step 3/3. This chain is Argininosuccinate lyase, found in Actinobacillus pleuropneumoniae serotype 5b (strain L20).